A 326-amino-acid chain; its full sequence is GTP 3',8-cyclase (326 aa).

The Radical SAM core domain maps to 4–227 (KHERNINYMR…LTPQKNILGN (224 aa)). Arginine 13 serves as a coordination point for GTP. Residues cysteine 20 and cysteine 24 each coordinate [4Fe-4S] cluster. S-adenosyl-L-methionine is bound at residue tyrosine 26. [4Fe-4S] cluster is bound at residue cysteine 27. Residue arginine 63 participates in GTP binding. Glycine 67 provides a ligand contact to S-adenosyl-L-methionine. Residue threonine 94 coordinates GTP. Serine 118 provides a ligand contact to S-adenosyl-L-methionine. Lysine 155 lines the GTP pocket. Methionine 189 contributes to the S-adenosyl-L-methionine binding site. 2 residues coordinate [4Fe-4S] cluster: cysteine 253 and cysteine 256. GTP is bound at residue 258-260 (RIR). Cysteine 270 lines the [4Fe-4S] cluster pocket.

It belongs to the radical SAM superfamily. MoaA family. In terms of assembly, monomer and homodimer. Requires [4Fe-4S] cluster as cofactor.

It carries out the reaction GTP + AH2 + S-adenosyl-L-methionine = (8S)-3',8-cyclo-7,8-dihydroguanosine 5'-triphosphate + 5'-deoxyadenosine + L-methionine + A + H(+). Its pathway is cofactor biosynthesis; molybdopterin biosynthesis. Functionally, catalyzes the cyclization of GTP to (8S)-3',8-cyclo-7,8-dihydroguanosine 5'-triphosphate. The protein is GTP 3',8-cyclase of Syntrophomonas wolfei subsp. wolfei (strain DSM 2245B / Goettingen).